The primary structure comprises 233 residues: Large ribosomal subunit protein uL1 (233 aa).

The protein belongs to the universal ribosomal protein uL1 family. As to quaternary structure, part of the 50S ribosomal subunit.

Binds directly to 23S rRNA. The L1 stalk is quite mobile in the ribosome, and is involved in E site tRNA release. Functionally, protein L1 is also a translational repressor protein, it controls the translation of the L11 operon by binding to its mRNA. This Vibrio parahaemolyticus serotype O3:K6 (strain RIMD 2210633) protein is Large ribosomal subunit protein uL1.